Here is an 82-residue protein sequence, read N- to C-terminus: Small ribosomal subunit protein bS16 (82 aa).

It belongs to the bacterial ribosomal protein bS16 family.

The protein is Small ribosomal subunit protein bS16 of Pectobacterium carotovorum subsp. carotovorum (strain PC1).